Consider the following 576-residue polypeptide: Glucose-6-phosphate 1-dehydrogenase 1, chloroplastic (576 aa).

Residues 1–50 (MATHSMIIPSPSSSSSSLATAASPFKETLPLFSRSLTFPRKSLFSQVRLR) constitute a chloroplast transit peptide. NADP(+)-binding positions include 97-104 (GASGDLAK) and Arg-131. A disulfide bond links Cys-149 and Cys-157. Lys-234 contributes to the NADP(+) binding site. Residues Lys-234, 264–268 (HYLGK), Glu-302, and Asp-321 each bind D-glucose 6-phosphate. The active-site Proton acceptor is His-326. An NADP(+)-binding site is contributed by Lys-419. Residues Lys-422 and Arg-427 each coordinate D-glucose 6-phosphate. The NADP(+) site is built by Arg-432 and Arg-461. Gln-463 serves as a coordination point for D-glucose 6-phosphate. Residues 469–471 (YLR) and Arg-554 each bind NADP(+).

This sequence belongs to the glucose-6-phosphate dehydrogenase family. Forms homodimer. Interacts with G6PD2, G6PD3 and G6PD4. Expressed in leaves, stems, buds, flowers and siliques.

It is found in the plastid. Its subcellular location is the chloroplast stroma. The protein resides in the peroxisome. The enzyme catalyses D-glucose 6-phosphate + NADP(+) = 6-phospho-D-glucono-1,5-lactone + NADPH + H(+). It participates in carbohydrate degradation; pentose phosphate pathway; D-ribulose 5-phosphate from D-glucose 6-phosphate (oxidative stage): step 1/3. With respect to regulation, regulated by metabolites. Post-translationally inactivated by cysteine-mediated redox modification via the ferredoxin-thioredoxin system in the light and this avoids futile cycles with photosynthetic CO2 fixation. Functionally, catalyzes the rate-limiting step of the oxidative pentose-phosphate pathway, which represents a route for the dissimilation of carbohydrates besides glycolysis. The main function of this enzyme is to provide reducing power (NADPH) and pentose phosphates for fatty acid and nucleic acid synthesis which are involved in membrane synthesis and cell division. The chain is Glucose-6-phosphate 1-dehydrogenase 1, chloroplastic from Arabidopsis thaliana (Mouse-ear cress).